A 546-amino-acid chain; its full sequence is Glutamate--tRNA ligase (546 aa).

Positions 42-52 match the 'HIGH' region motif; sequence PSPTGFIHLGN. Positions 293-297 match the 'KMSKS' region motif; the sequence is KLSKR. Position 296 (lysine 296) interacts with ATP.

Belongs to the class-I aminoacyl-tRNA synthetase family. Glutamate--tRNA ligase type 1 subfamily. As to quaternary structure, monomer.

The protein resides in the cytoplasm. It carries out the reaction tRNA(Glu) + L-glutamate + ATP = L-glutamyl-tRNA(Glu) + AMP + diphosphate. In terms of biological role, catalyzes the attachment of glutamate to tRNA(Glu) in a two-step reaction: glutamate is first activated by ATP to form Glu-AMP and then transferred to the acceptor end of tRNA(Glu). This is Glutamate--tRNA ligase from Acetivibrio thermocellus (strain ATCC 27405 / DSM 1237 / JCM 9322 / NBRC 103400 / NCIMB 10682 / NRRL B-4536 / VPI 7372) (Clostridium thermocellum).